A 308-amino-acid polypeptide reads, in one-letter code: Spermidine synthase 1 (308 aa).

In terms of domain architecture, PABS spans 17–254 (PGWFSEISPL…GVIGFMLCST (238 aa)). Glutamine 48 contributes to the S-adenosyl 3-(methylsulfanyl)propylamine binding site. Tyrosine 78 serves as a coordination point for putrescine. S-adenosyl 3-(methylsulfanyl)propylamine-binding positions include glutamine 79, aspartate 103, glutamate 123, 154-155 (DG), and aspartate 173. Aspartate 173 serves as the catalytic Proton acceptor. Putrescine-binding positions include 173 to 176 (DSSD) and tyrosine 242.

It belongs to the spermidine/spermine synthase family.

It carries out the reaction S-adenosyl 3-(methylsulfanyl)propylamine + putrescine = S-methyl-5'-thioadenosine + spermidine + H(+). It functions in the pathway amine and polyamine biosynthesis; spermidine biosynthesis; spermidine from putrescine: step 1/1. The protein is Spermidine synthase 1 of Datura stramonium (Jimsonweed).